The chain runs to 157 residues: Mannose-specific lectin (157 aa).

Residues 1-19 (MAKASLLILAAIFLGVITP) constitute a signal peptide (or 23; in 70% of the molecules). The 109-residue stretch at 24–132 (DNILYSGETL…DRWATGTHTG (109 aa)) folds into the Bulb-type lectin domain. Alpha-D-mannopyranose contacts are provided by Q49, D51, N53, Y57, D60, K61, W64, A65, N67, Q80, D82, N84, Y88, I95, W96, N99, N106, Q112, D114, N116, Y120, and W125. A disulfide bond links C52 and C75. Residues 129–157 (THTGLVGIPASPPSEKYPTAGKIKLVTAK) constitute a propeptide, removed in mature form.

As to quaternary structure, homotetramer.

It localises to the secreted. Its function is as follows. Mannose-specific lectin which binds alpha-D-linked mannose. Displays a high affinity for alpha-(1-3)-mannose oligomers. Displays antiviral activity and therefore may contribute to defense against infections. This chain is Mannose-specific lectin, found in Galanthus nivalis (Common snowdrop).